Consider the following 509-residue polypeptide: Meiotically up-regulated gene 157 protein (509 aa).

The next 5 helical transmembrane spans lie at 4 to 24 (WQAILFFLFGIAFANNLNIPW), 140 to 160 (LATLILGAIQTQAEMLIQFPY), 296 to 316 (ACVLQYFIPANAMMVVELSHL), 368 to 388 (ILFMDDANVPSLLSLPYLGFV), and 417 to 437 (ISGIGGPHIGLRNVWPMSLIV).

It localises to the endoplasmic reticulum membrane. Functionally, has a role in meiosis. This Schizosaccharomyces pombe (strain 972 / ATCC 24843) (Fission yeast) protein is Meiotically up-regulated gene 157 protein (mug157).